Here is a 212-residue protein sequence, read N- to C-terminus: Kynurenine formamidase (212 aa).

Trp-18 contributes to the substrate binding site. Zn(2+) is bound by residues His-48, His-52, and Asp-54. The active-site Proton donor/acceptor is the His-58. Residues His-160 and Glu-172 each contribute to the Zn(2+) site.

This sequence belongs to the Cyclase 1 superfamily. KynB family. In terms of assembly, homodimer. The cofactor is Zn(2+).

The enzyme catalyses N-formyl-L-kynurenine + H2O = L-kynurenine + formate + H(+). It participates in amino-acid degradation; L-tryptophan degradation via kynurenine pathway; L-kynurenine from L-tryptophan: step 2/2. Functionally, catalyzes the hydrolysis of N-formyl-L-kynurenine to L-kynurenine, the second step in the kynurenine pathway of tryptophan degradation. The protein is Kynurenine formamidase of Paraburkholderia phytofirmans (strain DSM 17436 / LMG 22146 / PsJN) (Burkholderia phytofirmans).